The sequence spans 233 residues: Small ribosomal subunit protein uS3 (233 aa).

The KH type-2 domain maps to 39 to 107; the sequence is VREFLKAKLK…PVHVNIEEVR (69 aa). A disordered region spans residues 209-233; the sequence is PGQVSAEPTQPEKKMRKGGRNAAAN.

This sequence belongs to the universal ribosomal protein uS3 family. As to quaternary structure, part of the 30S ribosomal subunit. Forms a tight complex with proteins S10 and S14.

Functionally, binds the lower part of the 30S subunit head. Binds mRNA in the 70S ribosome, positioning it for translation. This Laribacter hongkongensis (strain HLHK9) protein is Small ribosomal subunit protein uS3.